A 317-amino-acid chain; its full sequence is Enoyl-CoA delta isomerase 3, peroxisomal (317 aa).

The 46-residue stretch at M1–A46 folds into the ACB domain. A disordered region spans residues L40 to E60. S120–L124 lines the substrate pocket. The Microbody targeting signal signature appears at A315–L317.

Belongs to the enoyl-CoA hydratase/isomerase family. In terms of tissue distribution, expressed at high levels in the kidney. Also detected at very low levels in the duodenum, jejunum, ileum, heart, liver, lung, and brown adipose tissue (at protein level). In the kidney, expression seems to be localized mainly to the proximal tubule.

Its subcellular location is the peroxisome. It carries out the reaction a (3Z)-enoyl-CoA = a 4-saturated (2E)-enoyl-CoA. The enzyme catalyses a (3E)-enoyl-CoA = a 4-saturated (2E)-enoyl-CoA. It catalyses the reaction (3E)-nonenoyl-CoA = (2E)-nonenoyl-CoA. Catalyzes the isomerization of trans-3-nonenoyl-CoA into trans-2-nonenoyl-CoA. May also have activity towards other enoyl-CoA species. This Mus musculus (Mouse) protein is Enoyl-CoA delta isomerase 3, peroxisomal.